Reading from the N-terminus, the 474-residue chain is Dihydrolipoyl dehydrogenase (474 aa).

Residues 39–47 (EKDAYGGTC), K56, and A118 contribute to the FAD site. An intrachain disulfide couples C47 to C52. NAD(+) is bound by residues 186–190 (GGGYI), E209, and 275–278 (AVGR). Residues D318 and A326 each coordinate FAD. The active-site Proton acceptor is the H450.

The protein belongs to the class-I pyridine nucleotide-disulfide oxidoreductase family. As to quaternary structure, homodimer. The cofactor is FAD.

The protein resides in the cytoplasm. The enzyme catalyses N(6)-[(R)-dihydrolipoyl]-L-lysyl-[protein] + NAD(+) = N(6)-[(R)-lipoyl]-L-lysyl-[protein] + NADH + H(+). The protein is Dihydrolipoyl dehydrogenase (lpdA) of Halobacterium salinarum (strain ATCC 700922 / JCM 11081 / NRC-1) (Halobacterium halobium).